A 207-amino-acid polypeptide reads, in one-letter code: MGTVKITSRYGILLGFIALLCTIISAGIFFLTKDKIDAVIAAQQRELLLQVIPQDYFNNNLLESAVIPQDKNFVGIQKIYFAKKDGNVSAYAYETTAPDGYSGDIRLLVGLDPKGEVLGVRVIEHHETPGLGDKIERRISNWILGFTNQSINEHNLSEWAVKKDGGKFDQFSGATITPRAVVNQTKRSALIMLNNQALLQQLSTQVK.

A helical membrane pass occupies residues 11–31; that stretch reads GILLGFIALLCTIISAGIFFL. At Thr175 the chain carries FMN phosphoryl threonine.

Belongs to the RnfG family. In terms of assembly, the complex is composed of six subunits: RnfA, RnfB, RnfC, RnfD, RnfE and RnfG. It depends on FMN as a cofactor.

It localises to the cell inner membrane. In terms of biological role, part of a membrane-bound complex that couples electron transfer with translocation of ions across the membrane. The sequence is that of Ion-translocating oxidoreductase complex subunit G from Haemophilus influenzae (strain ATCC 51907 / DSM 11121 / KW20 / Rd).